The chain runs to 269 residues: Formamidopyrimidine-DNA glycosylase (269 aa).

P2 serves as the catalytic Schiff-base intermediate with DNA. E3 functions as the Proton donor in the catalytic mechanism. K57 serves as the catalytic Proton donor; for beta-elimination activity. Residues H90, R109, and K150 each contribute to the DNA site. The FPG-type zinc finger occupies 235–269 (RVYGRNGEPCRTCGTPIETAKHGQRSTFFCRRCQK). The Proton donor; for delta-elimination activity role is filled by R259.

Belongs to the FPG family. In terms of assembly, monomer. Zn(2+) serves as cofactor.

It catalyses the reaction Hydrolysis of DNA containing ring-opened 7-methylguanine residues, releasing 2,6-diamino-4-hydroxy-5-(N-methyl)formamidopyrimidine.. The catalysed reaction is 2'-deoxyribonucleotide-(2'-deoxyribose 5'-phosphate)-2'-deoxyribonucleotide-DNA = a 3'-end 2'-deoxyribonucleotide-(2,3-dehydro-2,3-deoxyribose 5'-phosphate)-DNA + a 5'-end 5'-phospho-2'-deoxyribonucleoside-DNA + H(+). Its function is as follows. Involved in base excision repair of DNA damaged by oxidation or by mutagenic agents. Acts as a DNA glycosylase that recognizes and removes damaged bases. Has a preference for oxidized purines, such as 7,8-dihydro-8-oxoguanine (8-oxoG). Has AP (apurinic/apyrimidinic) lyase activity and introduces nicks in the DNA strand. Cleaves the DNA backbone by beta-delta elimination to generate a single-strand break at the site of the removed base with both 3'- and 5'-phosphates. The chain is Formamidopyrimidine-DNA glycosylase from Pectobacterium carotovorum subsp. carotovorum (strain PC1).